The chain runs to 619 residues: 1-deoxy-D-xylulose-5-phosphate synthase (619 aa).

Residues H74 and 115–117 (GHS) each bind thiamine diphosphate. D146 contributes to the Mg(2+) binding site. Thiamine diphosphate-binding positions include 147 to 148 (GA), N175, and Y285. Mg(2+) is bound at residue N175. The disordered stretch occupies residues 289–312 (EKSPSKYHAVPPRANEKEKPSKPC). Over residues 302–312 (ANEKEKPSKPC) the composition is skewed to basic and acidic residues. Residue E365 participates in thiamine diphosphate binding.

This sequence belongs to the transketolase family. DXPS subfamily. Homodimer. Mg(2+) is required as a cofactor. It depends on thiamine diphosphate as a cofactor.

It catalyses the reaction D-glyceraldehyde 3-phosphate + pyruvate + H(+) = 1-deoxy-D-xylulose 5-phosphate + CO2. It participates in metabolic intermediate biosynthesis; 1-deoxy-D-xylulose 5-phosphate biosynthesis; 1-deoxy-D-xylulose 5-phosphate from D-glyceraldehyde 3-phosphate and pyruvate: step 1/1. Its function is as follows. Catalyzes the acyloin condensation reaction between C atoms 2 and 3 of pyruvate and glyceraldehyde 3-phosphate to yield 1-deoxy-D-xylulose-5-phosphate (DXP). This Clostridium botulinum (strain Eklund 17B / Type B) protein is 1-deoxy-D-xylulose-5-phosphate synthase.